The following is a 205-amino-acid chain: Cytochrome c oxidase subunit 3 (205 aa).

5 consecutive transmembrane segments (helical) span residues 28–48 (GTIV…AMYF), 72–92 (ALVI…GVFA), 104–124 (WFSL…YEYF), 142–162 (FFIT…AFVV), and 184–204 (SYYW…IYFI).

Belongs to the cytochrome c oxidase subunit 3 family. As to quaternary structure, associates with subunits I, II and IV to form cytochrome c oxidase.

It localises to the cell membrane. It carries out the reaction 4 Fe(II)-[cytochrome c] + O2 + 8 H(+)(in) = 4 Fe(III)-[cytochrome c] + 2 H2O + 4 H(+)(out). This chain is Cytochrome c oxidase subunit 3 (ctaE), found in Corynebacterium diphtheriae (strain ATCC 700971 / NCTC 13129 / Biotype gravis).